Consider the following 373-residue polypeptide: D-alanine--D-alanine ligase (373 aa).

Residues 165–369 enclose the ATP-grasp domain; the sequence is KRLAREAGIP…FGDLVSALIA (205 aa). 192 to 247 serves as a coordination point for ATP; sequence KERLGLPVFVKPARGGSSIGISKVDSWEEFDAAIDLAFSNDNKVIVEAMIHGAEVE. Positions 324, 336, and 338 each coordinate Mg(2+).

Belongs to the D-alanine--D-alanine ligase family. It depends on Mg(2+) as a cofactor. The cofactor is Mn(2+).

The protein resides in the cytoplasm. It catalyses the reaction 2 D-alanine + ATP = D-alanyl-D-alanine + ADP + phosphate + H(+). It participates in cell wall biogenesis; peptidoglycan biosynthesis. Its function is as follows. Cell wall formation. The polypeptide is D-alanine--D-alanine ligase (Corynebacterium jeikeium (strain K411)).